Here is a 398-residue protein sequence, read N- to C-terminus: Chalcone synthase 1 (398 aa).

A CoA-binding site is contributed by 58 to 65; it reads KFKRMCDK. Cys167 functions as the Acyl-thioester intermediate in the catalytic mechanism. Residues Thr200 and 219 to 220 each bind substrate; that span reads GD. Residue Ala311 participates in CoA binding.

The protein belongs to the thiolase-like superfamily. Chalcone/stilbene synthases family. In terms of assembly, homodimer.

The enzyme catalyses (E)-4-coumaroyl-CoA + 3 malonyl-CoA + 3 H(+) = 2',4,4',6'-tetrahydroxychalcone + 3 CO2 + 4 CoA. Its pathway is secondary metabolite biosynthesis; flavonoid biosynthesis. Its function is as follows. The primary product of this enzyme is 4,2',4',6'-tetrahydroxychalcone (also termed naringenin-chalcone or chalcone) which can under specific conditions spontaneously isomerize into naringenin. The chain is Chalcone synthase 1 (CHS1) from Oryza sativa subsp. japonica (Rice).